The following is a 213-amino-acid chain: Transmembrane emp24 domain-containing protein p24delta8 (213 aa).

Positions Met1–Ser22 are cleaved as a signal peptide. The Lumenal portion of the chain corresponds to Met23–Lys180. The region spanning Thr32 to Thr148 is the GOLD domain. Asn97 is a glycosylation site (N-linked (GlcNAc...) asparagine). Residues Leu163–Ser176 adopt a coiled-coil conformation. Position 166 is an omega-N-methylated arginine (Arg166). Asn174 is a glycosylation site (N-linked (GlcNAc...) asparagine). Residues Met181–Leu203 traverse the membrane as a helical segment. Residues His202 to Ile213 form an interaction with ARF1 region. Residues Lys204–Ile213 lie on the Cytoplasmic side of the membrane. Positions Phe206–Phe207 match the COPII vesicle coat-binding motif. Residues Phe206 to Ile213 carry the COPI vesicle coat-binding motif.

It belongs to the EMP24/GP25L family. In terms of assembly, probably oligomerizes with other members of the EMP24/GP25L family. Associates with the COPI vesicle coat (coatomer). Associates with the COPII vesicle coat (coatomer). Interacts with ARF1 (GDP-bound).

It is found in the endoplasmic reticulum membrane. It localises to the golgi apparatus. The protein resides in the cis-Golgi network membrane. The protein localises to the golgi stack membrane. In terms of biological role, involved in vesicular protein trafficking. Mainly functions in the early secretory pathway. Thought to act as cargo receptor at the lumenal side for incorporation of secretory cargo molecules into transport vesicles and to be involved in vesicle coat formation at the cytoplasmic side. On Golgi membranes, acts as a primary receptor for ARF1-GDP which is involved in COPI-vesicle formation. This Arabidopsis thaliana (Mouse-ear cress) protein is Transmembrane emp24 domain-containing protein p24delta8.